Here is a 651-residue protein sequence, read N- to C-terminus: Endo-1,4-beta-xylanase A (651 aa).

The signal sequence occupies residues 1–30; the sequence is MKRKVKKMAAMATSIIMAIMIILHSIPVLA. Positions 33–227 constitute a GH11 domain; sequence IIYDNETGTH…SSGYANVYKN (195 aa). Glutamate 124 (nucleophile) is an active-site residue. The active-site Proton donor is glutamate 214. 3 CBM6 domains span residues 250–370, 387–507, and 527–647; these read SIIE…FIFS, SIIQ…FVFT, and SNIQ…FVFS. 2 residues coordinate Ca(2+): glutamate 253 and glutamate 255. Position 270 (threonine 270) interacts with D-xylotriose. A Ca(2+)-binding site is contributed by arginine 275. Repeat 1 spans residues 278 to 339; it reads GYIENGNTVT…SSTGSWNTYQ (62 aa). Residues 278–616 are 3 X 61 AA approximate repeats; the sequence is GYIENGNTVT…GSTGSFDTYR (339 aa). Positions 279, 336, and 363 each coordinate D-xylotriose. D-xylobiose-binding residues include tyrosine 279, asparagine 336, and asparagine 363. A Ca(2+)-binding site is contributed by aspartate 365. Copy 2 of the repeat occupies 415–476; sequence GYIENGYSTT…PSTNSWDSYQ (62 aa). Ca(2+)-binding residues include glutamine 530, glutamate 532, and serine 552. Repeat 3 spans residues 555–616; that stretch reads GYIENGYSTT…GSTGSFDTYR (62 aa). D-xylotriose is bound by residues tyrosine 556, aspartate 613, and asparagine 640. Position 642 (aspartate 642) interacts with Ca(2+).

Belongs to the glycosyl hydrolase 11 (cellulase G) family.

It is found in the secreted. It catalyses the reaction Endohydrolysis of (1-&gt;4)-beta-D-xylosidic linkages in xylans.. The protein operates within glycan degradation; xylan degradation. Endoxylanase that degrades arabinoxylan and glucuronoxylan to xylobiose and xylotriose (in vitro). This is Endo-1,4-beta-xylanase A (xynA) from Thermoclostridium stercorarium (Clostridium stercorarium).